We begin with the raw amino-acid sequence, 113 residues long: Antimicrobial peptide microplusin (113 aa).

A signal peptide spans 1–19 (MKSLLVLALLAFGAVLVSA). Disulfide bonds link Cys-25/Cys-71, Cys-38/Cys-99, and Cys-60/Cys-65.

It is found in the secreted. Functionally, has bacteriostatic activity against Gram-positive bacteria, but not against Gram-negative bacteria. Has fungistatic activity against some but not all fungi. Binds and sequesters copper and iron ions. Copper-chelating activity is crucial for antimicrobial activity against M.luteus. This Argas monolakensis (Mono lake bird tick) protein is Antimicrobial peptide microplusin.